We begin with the raw amino-acid sequence, 203 residues long: NADH-quinone oxidoreductase subunit C (203 aa).

It belongs to the complex I 30 kDa subunit family. As to quaternary structure, NDH-1 is composed of 14 different subunits. Subunits NuoB, C, D, E, F, and G constitute the peripheral sector of the complex.

The protein localises to the cell inner membrane. The catalysed reaction is a quinone + NADH + 5 H(+)(in) = a quinol + NAD(+) + 4 H(+)(out). Functionally, NDH-1 shuttles electrons from NADH, via FMN and iron-sulfur (Fe-S) centers, to quinones in the respiratory chain. The immediate electron acceptor for the enzyme in this species is believed to be ubiquinone. Couples the redox reaction to proton translocation (for every two electrons transferred, four hydrogen ions are translocated across the cytoplasmic membrane), and thus conserves the redox energy in a proton gradient. The polypeptide is NADH-quinone oxidoreductase subunit C (Polaromonas sp. (strain JS666 / ATCC BAA-500)).